Here is a 4545-residue protein sequence, read N- to C-terminus: Prolow-density lipoprotein receptor-related protein 1 (4545 aa).

The signal sequence occupies residues 1–19; that stretch reads MLTPPLLLLLPLLSALVSG. The Extracellular portion of the chain corresponds to 20–4424; it reads ATMDAPKTCS…SQQQPGHMAS (4405 aa). 2 LDL-receptor class A domains span residues 26-67 and 71-111; these read KTCS…ICPQ and QRCP…HCRE. Intrachain disulfides connect C28–C41, C35–C54, C48–C65, C73–C86, C80–C99, and C93–C109. One can recognise an EGF-like 1 domain in the interval 112 to 150; the sequence is LRANCSRMGCQHHCVPTPSGPTCYCNSSFQLQADGKTCK. N-linked (GlcNAc...) asparagine glycosylation occurs at N115. 6 disulfides stabilise this stretch: C116/C125, C121/C134, C136/C149, C155/C165, C161/C174, and C176/C189. Residue N137 is glycosylated (N-linked (GlcNAc...) asparagine). Positions 151-190 constitute an EGF-like 2; calcium-binding domain; that stretch reads DFDECSVYGTCSQLCTNTDGSFTCGCVEGYLLQPDNRSCK. Residues N186, N240, and N275 are each glycosylated (N-linked (GlcNAc...) asparagine). LDL-receptor class B repeat units lie at residues 293–335, 336–379, and 380–423; these read GNFY…DPAM, GKVF…DLVS, and RLVY…FENY. N-linked (GlcNAc...) asparagine glycosylation occurs at N358. N447 is a glycosylation site (N-linked (GlcNAc...) asparagine). Residues 475–521 form the EGF-like 3 domain; sequence RSHACENDQYGKPGGCSDICLLANSHKARTCRCRSGFSLGSDGKSCK. 3 disulfide bridges follow: C479-C494, C490-C505, and C507-C520. 4 LDL-receptor class B repeats span residues 572 to 614, 615 to 660, 661 to 711, and 712 to 755; these read GFIY…DWMG, DNLY…DPLN, GWMY…DIPA, and GRLY…HGNY. N730 carries an N-linked (GlcNAc...) asparagine glycan. The EGF-like 4 domain maps to 804–844; that stretch reads GTNKCRVNNGGCSSLCLATPGSRQCACAEDQVLDTDGVTCL. Cystine bridges form between C808–C819, C815–C828, C830–C843, C855–C867, C862–C880, C874–C891, C896–C908, C903–C921, C915–C932, C937–C949, C944–C962, C956–C972, C977–C990, C985–C1003, C997–C1012, C1016–C1028, C1023–C1041, C1035–C1052, C1063–C1076, C1070–C1089, C1083–C1098, C1105–C1119, C1113–C1132, C1126–C1141, C1146–C1160, C1153–C1173, C1167–C1183, C1186–C1197, C1193–C1207, C1209–C1222, C1228–C1238, C1234–C1247, and C1249–C1262. 8 LDL-receptor class A domains span residues 853–893, 894–934, 935–974, 975–1014, 1014–1054, 1061–1100, 1103–1143, and 1144–1183; these read PQCQ…LCHQ, HTCP…TCSA, RTCP…SCAY, PTCF…GCSH, HSCS…NCTN, GGCH…SCEG, HVCD…NCEA, and LACR…GELC. The Ca(2+) site is built by W872, D875, D877, D879, D885, and E886. N929 is a glycosylation site (N-linked (GlcNAc...) asparagine). Residues W1033, D1036, D1038, D1040, D1046, and E1047 each contribute to the Ca(2+) site. N-linked (GlcNAc...) asparagine glycosylation is present at N1051. W1081, D1084, D1086, D1088, D1094, and E1095 together coordinate Ca(2+). 2 N-linked (GlcNAc...) asparagine glycosylation sites follow: N1155 and N1156. 2 EGF-like domains span residues 1184–1223 and 1224–1263; these read DQCS…HTCQ and IQSY…ESCR. 2 N-linked (GlcNAc...) asparagine glycosylation sites follow: N1196 and N1219. LDL-receptor class B repeat units lie at residues 1310-1356, 1357-1399, 1400-1446, 1447-1491, and 1492-1532; these read SALY…DWIA, GNIY…DPRD, GILF…DYLE, KRIL…YGGE, and VYWT…YHPS. The N-linked (GlcNAc...) asparagine glycan is linked to N1512. The EGF-like 7 domain occupies 1537–1580; sequence APNPCEANGGRGPCSHLCLINYNRTVSCACPHLMKLHKDNTTCY. 3 disulfide bridges follow: C1541/C1554, C1550/C1564, and C1566/C1579. N1559, N1576, N1617, and N1646 each carry an N-linked (GlcNAc...) asparagine glycan. LDL-receptor class B repeat units follow at residues 1628 to 1670, 1671 to 1714, 1715 to 1754, and 1755 to 1799; these read QRVY…DWVS, RNLF…HPLR, GKLY…DFPE, and SKLY…MGDK. Residues N1724, N1734, N1764, and N1826 are each glycosylated (N-linked (GlcNAc...) asparagine). Positions 1847-1888 constitute an EGF-like 8 domain; the sequence is GTNPCSVNNGDCSQLCLPTSETTRSCMCTAGYSLRSGQQACE. 3 disulfide bridges follow: C1851–C1862, C1858–C1872, and C1874–C1887. N1934 is a glycosylation site (N-linked (GlcNAc...) asparagine). LDL-receptor class B repeat units follow at residues 1935–1977, 1978–2020, 2021–2064, and 2065–2108; these read DTIY…DWIA, GNIY…HPEK, GYLF…DYQG, and GKLY…FEDF. An N-linked (GlcNAc...) asparagine glycan is attached at N1996. At K2010 the chain carries N6-acetyllysine. A glycan (N-linked (GlcNAc...) asparagine) is linked at N2049. N-linked (GlcNAc...) asparagine glycans are attached at residues N2118 and N2128. Positions 2156–2196 constitute an EGF-like 9 domain; it reads GTNVCAVANGGCQQLCLYRGGGQRACACAHGMLAEDGASCR. 3 disulfides stabilise this stretch: C2160-C2171, C2167-C2181, and C2183-C2195. LDL-receptor class B repeat units lie at residues 2254–2295, 2296–2344, 2345–2389, 2390–2432, and 2433–2474; these read NRIF…HRGW, DTLY…DECQ, NLMF…DHRA, EKLY…YGEH, and IFWT…VAND. N-linked (GlcNAc...) asparagine glycosylation occurs at N2473. In terms of domain architecture, EGF-like 10 spans 2479-2519; it reads ELSPCRINNGGCQDLCLLTHQGHVNCSCRGGRILQEDFTCR. Disulfide bonds link C2483/C2494, C2490/C2504, and C2506/C2518. A glycan (N-linked (GlcNAc...) asparagine) is linked at N2503. An N-linked (GlcNAc...) asparagine glycan is attached at N2522. LDL-receptor class A domains follow at residues 2523–2564, 2565–2603, 2604–2642, 2643–2691, 2695–2733, 2733–2772, and 2773–2815; these read SSCR…YCNS, RRCK…PCNK, TACG…NCSA, TDCS…DCPG, PRCP…HCNK, KFCS…HCEG, and KTCG…GCLY. 6 disulfides stabilise this stretch: C2525–C2538, C2533–C2551, C2545–C2562, C2567–C2579, C2574–C2592, and C2586–C2601. N-linked (GlcNAc...) asparagine glycosylation occurs at N2602. 15 disulfide bridges follow: C2606/C2618, C2613/C2631, C2625/C2640, C2645/C2667, C2661/C2680, C2674/C2689, C2697/C2709, C2704/C2722, C2716/C2731, C2735/C2747, C2742/C2760, C2754/C2770, C2775/C2788, C2782/C2801, and C2795/C2813. Residues N2621 and N2639 are each glycosylated (N-linked (GlcNAc...) asparagine). N2816 carries an N-linked (GlcNAc...) asparagine glycan. LDL-receptor class A domains follow at residues 2817 to 2856, 2857 to 2900, and 2903 to 2941; these read STCD…ECEY, PTCG…HCTS, and HKCN…RGCH. 15 disulfide bridges follow: C2819/C2831, C2826/C2844, C2838/C2854, C2859/C2871, C2866/C2885, C2879/C2898, C2905/C2918, C2913/C2931, C2925/C2940, C2945/C2957, C2953/C2966, C2968/C2981, C2987/C2997, C2993/C3006, and C3008/C3022. N2906 carries N-linked (GlcNAc...) asparagine glycosylation. The EGF-like 11 domain maps to 2942–2982; it reads VNECLSRKLSGCSQDCEDLKIGFKCRCRPGFRLKDDGRTCA. Residues 2983-3023 enclose the EGF-like 12; calcium-binding domain; it reads DLDECSTTFPCSQLCINTHGSYKCLCVEGYAPRGGDPHSCK. N3049 and N3090 each carry an N-linked (GlcNAc...) asparagine glycan. 5 LDL-receptor class B repeats span residues 3070–3114, 3115–3157, 3158–3201, 3202–3244, and 3245–3285; these read QMIY…DWVG, GNLY…DVQN, GYLY…DYVT, ERIY…FEDY, and VYWT…FHAL. N3265 carries N-linked (GlcNAc...) asparagine glycosylation. One can recognise an EGF-like 13 domain in the interval 3291 to 3332; the sequence is PNHPCKVNNGGCSNLCLLSPGGGHKCACPTNFYLGGDGRTCV. Cystine bridges form between C3295–C3306, C3302–C3316, and C3318–C3331. LDL-receptor class A domains are found at residues 3333-3372, 3373-3411, 3412-3451, 3452-3492, 3493-3534, 3535-3573, 3574-3612, 3612-3650, 3653-3693, 3694-3734, and 3740-3779; these read SNCT…DCPE, FKCR…NCDI, HVCL…DCPE, VTCA…NCTQ, MTCG…ECDE, RTCE…SCTP, RPCS…DCTP, PRCD…ACGT, RTCP…ECAR, FICP…DCEP, and PHCK…DCSI. N3334 is a glycosylation site (N-linked (GlcNAc...) asparagine). 39 disulfides stabilise this stretch: C3335/C3347, C3342/C3360, C3354/C3370, C3375/C3387, C3382/C3400, C3394/C3409, C3414/C3427, C3421/C3440, C3434/C3449, C3454/C3467, C3461/C3480, C3474/C3490, C3495/C3508, C3502/C3521, C3515/C3532, C3537/C3549, C3544/C3562, C3556/C3571, C3576/C3588, C3583/C3601, C3595/C3610, C3614/C3626, C3621/C3639, C3633/C3648, C3655/C3667, C3662/C3680, C3674/C3691, C3696/C3710, C3704/C3723, C3717/C3732, C3742/C3755, C3750/C3768, C3762/C3777, C3786/C3799, C3793/C3808, C3810/C3823, C3829/C3839, C3835/C3848, and C3850/C3861. N-linked (GlcNAc...) asparagine glycosylation occurs at N3489. An N-linked (GlcNAc...) asparagine glycan is attached at N3663. EGF-like domains follow at residues 3782–3824 and 3825–3862; these read KLTS…PGCQ and DINE…NTCK. N-linked (GlcNAc...) asparagine glycosylation is present at N3789. N-linked (GlcNAc...) asparagine glycosylation occurs at N3840. 4 LDL-receptor class B repeats span residues 3913–3955, 3971–4013, 4014–4057, and 4058–4102; these read GRVY…HLNI, GNVY…DPLR, GTMY…DYHN, and ERLY…FEDY. Positions 3941-3944 match the Recognition site for proteolytical processing motif; the sequence is RHRR. The N-linked (GlcNAc...) asparagine glycan is linked to N3954. N-linked (GlcNAc...) asparagine glycosylation is found at N4076 and N4126. 7 EGF-like domains span residues 4148–4184, 4197–4233, 4233–4269, 4269–4305, 4305–4341, 4341–4376, and 4374–4410; these read VTNP…GTCV, RPGT…DKCE, ELDQ…PKCT, TAQV…DRCQ, QYRQ…PRCE, EVNK…PSCL, and SCLT…PRCE. 17 disulfide bridges follow: C4152/C4161, C4157/C4170, C4172/C4183, C4201/C4211, C4205/C4221, C4223/C4232, C4237/C4247, C4241/C4257, C4259/C4268, C4273/C4283, C4277/C4293, C4295/C4304, C4309/C4319, C4313/C4329, C4331/C4340, C4345/C4353, and C4348/C4364. N-linked (GlcNAc...) asparagine glycosylation is present at N4180. 2 N-linked (GlcNAc...) asparagine glycosylation sites follow: N4279 and N4280. N4365 carries N-linked (GlcNAc...) asparagine glycosylation. Cystine bridges form between C4366–C4375, C4378–C4388, C4382–C4398, and C4400–C4409. The chain crosses the membrane as a helical span at residues 4425 to 4445; the sequence is ILIPLLLLLLLLLVAGVVFWY. The Cytoplasmic portion of the chain corresponds to 4446–4545; it reads KRRVRGAKGF…PEDEIGDPLA (100 aa). Residues 4446–4545 are interaction with MAFB; it reads KRRVRGAKGF…PEDEIGDPLA (100 aa). A Phosphothreonine modification is found at T4461. The NPXY motif signature appears at 4503–4508; that stretch reads FTNPVY. At Y4508 the chain carries Phosphotyrosine. Phosphoserine occurs at positions 4518, 4521, and 4524.

Belongs to the LDLR family. Heterodimer of an 85-kDa membrane-bound carboxyl subunit and a non-covalently attached 515-kDa N-terminal subunit. Intracellular domain interacts with MAFB. Found in a complex with PID1/PCLI1, LRP1 and CUBNI. Interacts with SNX17, PID1/PCLI1, PDGF and CUBN. The intracellular domain interacts with SHC1, GULP1 and DAB1. Can weakly interact (via NPXY motif) with DAB2 (via PID domain); the interaction is enhanced by tyrosine phosphorylation of the NPXY motif. Interacts with MDK; promotes neuronal survival. Interacts with LRPAP1; this interaction is followed by rapid internalization. Interacts with uPA/PLAU and PAI1/SERPINE1, either individually or in complex with each other, leading to rapid endocytosis; this interaction is abolished in the presence of LRPAP1/RAP. Also interacts with tPA/PLAT alone or in complex with SERPINE1. Interacts with the urokinase receptor PLAUR; this interaction leads to PLAUR internalization and is impaired in the presence of SORL1. Interacts with PDGFB. Interacts with TAU/MAPT, leading to endocytosis; this interaction is reduced in the presence of LRPAP1/RAP. Interacts with IGFBP3. Interacts with ADGRG6. In terms of processing, phosphorylated on serine and threonine residues. Phosphorylated on tyrosine residues upon stimulation with PDGF. Tyrosine phosphorylation promotes interaction with SHC1. Post-translationally, cleaved into a 85 kDa membrane-spanning subunit (LRP-85) and a 515 kDa large extracellular domain (LRP-515) that remains non-covalently associated. Gamma-secretase-dependent cleavage of LRP-85 releases the intracellular domain from the membrane.

The protein resides in the cell membrane. Its subcellular location is the membrane. It localises to the coated pit. The protein localises to the golgi outpost. It is found in the cytoplasm. The protein resides in the cytoskeleton. Its subcellular location is the microtubule organizing center. It localises to the nucleus. In terms of biological role, endocytic receptor involved in endocytosis and in phagocytosis of apoptotic cells. Required for early embryonic development. Involved in cellular lipid homeostasis. Involved in the plasma clearance of chylomicron remnants and activated LRPAP1 (alpha 2-macroglobulin), as well as the local metabolism of complexes between plasminogen activators and their endogenous inhibitors. Acts as an alpha-2-macroglobulin receptor. Acts as a TAU/MAPT receptor and controls the endocytosis of TAU/MAPT as well as its subsequent spread. May modulate cellular events, such as APP metabolism, kinase-dependent intracellular signaling, neuronal calcium signaling as well as neurotransmission. Also acts as a receptor for IGFBP3 to mediate cell growth inhibition. Its function is as follows. (Microbial infection) Functions as a receptor for Vibrio cholerae cholix toxin and for Pseudomonas aeruginosa exotoxin A. This Mus musculus (Mouse) protein is Prolow-density lipoprotein receptor-related protein 1.